The chain runs to 187 residues: Crossover junction endodeoxyribonuclease RuvC (187 aa).

Residues Asp-7, Glu-67, and Asp-140 contribute to the active site. Mg(2+)-binding residues include Asp-7, Glu-67, and Asp-140.

Belongs to the RuvC family. In terms of assembly, homodimer which binds Holliday junction (HJ) DNA. The HJ becomes 2-fold symmetrical on binding to RuvC with unstacked arms; it has a different conformation from HJ DNA in complex with RuvA. In the full resolvosome a probable DNA-RuvA(4)-RuvB(12)-RuvC(2) complex forms which resolves the HJ. Mg(2+) is required as a cofactor.

The protein localises to the cytoplasm. It catalyses the reaction Endonucleolytic cleavage at a junction such as a reciprocal single-stranded crossover between two homologous DNA duplexes (Holliday junction).. Functionally, the RuvA-RuvB-RuvC complex processes Holliday junction (HJ) DNA during genetic recombination and DNA repair. Endonuclease that resolves HJ intermediates. Cleaves cruciform DNA by making single-stranded nicks across the HJ at symmetrical positions within the homologous arms, yielding a 5'-phosphate and a 3'-hydroxyl group; requires a central core of homology in the junction. The consensus cleavage sequence is 5'-(A/T)TT(C/G)-3'. Cleavage occurs on the 3'-side of the TT dinucleotide at the point of strand exchange. HJ branch migration catalyzed by RuvA-RuvB allows RuvC to scan DNA until it finds its consensus sequence, where it cleaves and resolves the cruciform DNA. This chain is Crossover junction endodeoxyribonuclease RuvC, found in Prosthecochloris aestuarii (strain DSM 271 / SK 413).